A 196-amino-acid chain; its full sequence is Ribosome maturation factor RimP (196 aa).

A disordered region spans residues 164–196 (LAPQKPNKPGPKKTGHEKKKPSNESAAGKPRAE). Residues 173–182 (GPKKTGHEKK) are compositionally biased toward basic residues.

It belongs to the RimP family.

The protein resides in the cytoplasm. Required for maturation of 30S ribosomal subunits. The polypeptide is Ribosome maturation factor RimP (Xanthomonas oryzae pv. oryzae (strain MAFF 311018)).